We begin with the raw amino-acid sequence, 449 residues long: Interferon-related developmental regulator 1 (449 aa).

Over residues 1-10 the composition is skewed to basic residues; that stretch reads MPKNKKRNAP. The disordered stretch occupies residues 1–42; the sequence is MPKNKKRNAPHRGGGGGGGSGAATSAATAGGPHRTVQPFSDE. Gly residues predominate over residues 12-21; the sequence is RGGGGGGGSG. Over residues 22-31 the composition is skewed to low complexity; that stretch reads AATSAATAGG.

It belongs to the IFRD family. In terms of assembly, interacts with PSIP1/LEDGF.

Functionally, could play a role in regulating gene activity in the proliferative and/or differentiative pathways induced by NGF. May be an autocrine factor that attenuates or amplifies the initial ligand-induced signal. This is Interferon-related developmental regulator 1 (Ifrd1) from Mus musculus (Mouse).